A 192-amino-acid polypeptide reads, in one-letter code: Nucleoside triphosphate pyrophosphatase (192 aa).

Asp73 serves as the catalytic Proton acceptor.

This sequence belongs to the Maf family. The cofactor is a divalent metal cation.

The protein resides in the cytoplasm. It catalyses the reaction a ribonucleoside 5'-triphosphate + H2O = a ribonucleoside 5'-phosphate + diphosphate + H(+). The enzyme catalyses a 2'-deoxyribonucleoside 5'-triphosphate + H2O = a 2'-deoxyribonucleoside 5'-phosphate + diphosphate + H(+). In terms of biological role, nucleoside triphosphate pyrophosphatase. May have a dual role in cell division arrest and in preventing the incorporation of modified nucleotides into cellular nucleic acids. This Ehrlichia canis (strain Jake) protein is Nucleoside triphosphate pyrophosphatase.